The chain runs to 199 residues: Recombination protein RecR (199 aa).

Residues 58–73 (CSRCFYFTEEDPCPLC) form a C4-type zinc finger. The region spanning 81 to 176 (QLICVVEEPQ…KVTRLAHGIP (96 aa)) is the Toprim domain.

The protein belongs to the RecR family.

May play a role in DNA repair. It seems to be involved in an RecBC-independent recombinational process of DNA repair. It may act with RecF and RecO. This Syntrophotalea carbinolica (strain DSM 2380 / NBRC 103641 / GraBd1) (Pelobacter carbinolicus) protein is Recombination protein RecR.